We begin with the raw amino-acid sequence, 174 residues long: B3 domain-containing protein At2g31862 (174 aa).

The TF-B3 DNA-binding region spans 1–71 (MWVNLSCMCH…KLYIALVPLD (71 aa)).

Its subcellular location is the nucleus. The chain is B3 domain-containing protein At2g31862 from Arabidopsis thaliana (Mouse-ear cress).